Reading from the N-terminus, the 233-residue chain is Sugar fermentation stimulation protein homolog (233 aa).

The protein belongs to the SfsA family.

This is Sugar fermentation stimulation protein homolog from Chelativorans sp. (strain BNC1).